Consider the following 353-residue polypeptide: MSDFWIHLLVYLVILFGFVIVSVLIFIWLERRLIGRFQLRPGPNRAGPFGLLQPIADAIKVLIKEDIIPSEADKGVFWLAPLVAFVPVMLMFAAIPFADGVMLVDLNIGILYILAVSSVTVIGIFMAGWSSNNKYSLLGAMRTIAQEVSYEIPLVLSILGVVMLTGSLSMNEIVKAQDVPFILLQPLGFFVYLSAAMAEVNRTPFDLLEAESEIIAGFHTEYSGMKFGLFYLMEYAEVLAVSAIATTLFLGGWQGPLLHPVFWFIAKILLVFMFIIWVRATLPRLRIDQVMAFGWKFLLPLSLANLVITAFEILIAPDINTAVLIGINIAVMFGLVLLFSRFYKLGGGRVSIK.

9 helical membrane passes run 8–28 (LLVYLVILFGFVIVSVLIFIW), 75–95 (GVFWLAPLVAFVPVMLMFAAI), 108–128 (IGILYILAVSSVTVIGIFMAG), 148–168 (VSYEIPLVLSILGVVMLTGSL), 179–199 (VPFILLQPLGFFVYLSAAMAE), 229–249 (LFYLMEYAEVLAVSAIATTLF), 258–278 (LHPVFWFIAKILLVFMFIIWV), 297–317 (FLLPLSLANLVITAFEILIAP), and 319–339 (INTAVLIGINIAVMFGLVLLF).

This sequence belongs to the complex I subunit 1 family. NDH-1 is composed of 14 different subunits. Subunits NuoA, H, J, K, L, M, N constitute the membrane sector of the complex.

Its subcellular location is the cell membrane. The catalysed reaction is a quinone + NADH + 5 H(+)(in) = a quinol + NAD(+) + 4 H(+)(out). In terms of biological role, NDH-1 shuttles electrons from NADH, via FMN and iron-sulfur (Fe-S) centers, to quinones in the respiratory chain. The immediate electron acceptor for the enzyme in this species is believed to be ubiquinone. Couples the redox reaction to proton translocation (for every two electrons transferred, four hydrogen ions are translocated across the cytoplasmic membrane), and thus conserves the redox energy in a proton gradient. This subunit may bind ubiquinone. In Dehalococcoides mccartyi (strain CBDB1), this protein is NADH-quinone oxidoreductase subunit H.